Consider the following 317-residue polypeptide: Acetyl-coenzyme A carboxylase carboxyl transferase subunit alpha (317 aa).

One can recognise a CoA carboxyltransferase C-terminal domain in the interval 37-292; the sequence is QISQKLEDTK…EEYILKAFNE (256 aa).

Belongs to the AccA family. As to quaternary structure, acetyl-CoA carboxylase is a heterohexamer composed of biotin carboxyl carrier protein (AccB), biotin carboxylase (AccC) and two subunits each of ACCase subunit alpha (AccA) and ACCase subunit beta (AccD).

Its subcellular location is the cytoplasm. The catalysed reaction is N(6)-carboxybiotinyl-L-lysyl-[protein] + acetyl-CoA = N(6)-biotinyl-L-lysyl-[protein] + malonyl-CoA. It functions in the pathway lipid metabolism; malonyl-CoA biosynthesis; malonyl-CoA from acetyl-CoA: step 1/1. Functionally, component of the acetyl coenzyme A carboxylase (ACC) complex. First, biotin carboxylase catalyzes the carboxylation of biotin on its carrier protein (BCCP) and then the CO(2) group is transferred by the carboxyltransferase to acetyl-CoA to form malonyl-CoA. The sequence is that of Acetyl-coenzyme A carboxylase carboxyl transferase subunit alpha from Flavobacterium psychrophilum (strain ATCC 49511 / DSM 21280 / CIP 103535 / JIP02/86).